Consider the following 745-residue polypeptide: Probable endochitinase ARB_07371 (745 aa).

An N-terminal signal peptide occupies residues methionine 1–alanine 23. The region spanning threonine 30 to asparagine 351 is the GH18 domain. The active-site Proton donor is glutamate 178. Disordered regions lie at residues asparagine 351–threonine 372 and tryptophan 395–isoleucine 446. Low complexity predominate over residues threonine 357–threonine 372. Asparagine 438 and asparagine 484 each carry an N-linked (GlcNAc...) asparagine glycan. The tract at residues serine 651 to threonine 715 is disordered. The GPI-anchor amidated glycine moiety is linked to residue glycine 720. Residues glycine 721–glutamine 745 constitute a propeptide, removed in mature form.

It belongs to the glycosyl hydrolase 18 family. Chitinase class III subfamily.

The protein localises to the cell membrane. The protein resides in the secreted. It is found in the cell wall. It catalyses the reaction Random endo-hydrolysis of N-acetyl-beta-D-glucosaminide (1-&gt;4)-beta-linkages in chitin and chitodextrins.. GPI-anchored chitinase involved in the degradation of chitin, a component of the cell walls of fungi and exoskeletal elements of some animals (including worms and arthropods). Required to reshape the cell wall at the sites where cell wall remodeling and/or cell wall maturation actively take place such as sites of conidia formation. The chain is Probable endochitinase ARB_07371 from Arthroderma benhamiae (strain ATCC MYA-4681 / CBS 112371) (Trichophyton mentagrophytes).